The primary structure comprises 151 residues: NAD(P)H-quinone oxidoreductase subunit N (151 aa).

Belongs to the complex I NdhN subunit family. As to quaternary structure, NDH-1 can be composed of about 15 different subunits; different subcomplexes with different compositions have been identified which probably have different functions.

It is found in the cellular thylakoid membrane. The enzyme catalyses a plastoquinone + NADH + (n+1) H(+)(in) = a plastoquinol + NAD(+) + n H(+)(out). It catalyses the reaction a plastoquinone + NADPH + (n+1) H(+)(in) = a plastoquinol + NADP(+) + n H(+)(out). In terms of biological role, NDH-1 shuttles electrons from an unknown electron donor, via FMN and iron-sulfur (Fe-S) centers, to quinones in the respiratory and/or the photosynthetic chain. The immediate electron acceptor for the enzyme in this species is believed to be plastoquinone. Couples the redox reaction to proton translocation, and thus conserves the redox energy in a proton gradient. Cyanobacterial NDH-1 also plays a role in inorganic carbon-concentration. In Acaryochloris marina (strain MBIC 11017), this protein is NAD(P)H-quinone oxidoreductase subunit N.